Reading from the N-terminus, the 592-residue chain is MKTGKIIKVSGPLVVAEGMDEANIYDVCKVGEKGLIGEIIEMRGDKASIQVYEETSGIGPGDPVVTTGEPLSVELGPGLIESMFDGIQRPLDAFMEAAKSSFLTRGVSVPSLNREKKWDFKPTAKVGDDVKSGTVIGTVQETPVVEQRIMIPIGIEGKIKEIKAGSFTVTETIAIVETEKGDREVQLMQKWPVRKGRPYSAKINPVEPMLTGQRVIDTFFPVAKGGAAAIPGPFGAGKTVTQHQIAKWGDAEIVVYVGCGERGNEMTDVVNEFPELIDPKTGESLMKRTVLIANTSNMPVAAREASIYTGITIAEYFRDMGYSVSIMADSTSRWAEALREMSGRLEEMPGDEGYPAYLGSRLADYYERAGKVECLGNDGRIGSITAIGAVSPPGGDISEPVSQSTLRIVKVFWGLDAQLAYQRHFPTINWLTSYSLYADTIDKWMNGNVAENWGALRLEAMTILQDEAQLQEIVRLVGIDALSEKDRLKLDVAKSIREDYLQQNGFHEIDTYTSLKKQYKMLNLILGYRKEAERALEAGVYLNDILAMEDLKDRIARSKYIHEDDLEKMDQIVVDLKNAIDNLINKGGVANA.

ATP is bound at residue 232–239; sequence GPFGAGKT.

Belongs to the ATPase alpha/beta chains family.

It carries out the reaction ATP + H2O + 4 H(+)(in) = ADP + phosphate + 5 H(+)(out). Its function is as follows. Produces ATP from ADP in the presence of a proton gradient across the membrane. The V-type alpha chain is a catalytic subunit. This Clostridium botulinum (strain Eklund 17B / Type B) protein is V-type ATP synthase alpha chain.